The chain runs to 1061 residues: Transcription termination factor 2 (1061 aa).

Disordered regions lie at residues M1–A163 and I212–S253. Residues L32–S46 show a composition bias toward low complexity. A phosphoserine mark is found at S108 and S110. The span at L138–Q152 shows a compositional bias: acidic residues. Phosphoserine occurs at positions 214 and 215. T216 carries the phosphothreonine modification. Positions K237–S253 are enriched in polar residues. The region spanning W452–S652 is the Helicase ATP-binding domain. An ATP-binding site is contributed by D465–T472. The tract at residues G485–R523 is disordered. Basic residues predominate over residues K506–T522. A DEAH box motif is present at residues D603–H606. Residues K891–K1056 enclose the Helicase C-terminal domain.

This sequence belongs to the SNF2/RAD54 helicase family.

Its subcellular location is the nucleus. Its function is as follows. DsDNA-dependent ATPase which acts as a transcription termination factor by coupling ATP hydrolysis with removal of RNA polymerase II from the DNA template. The polypeptide is Transcription termination factor 2 (lds) (Drosophila melanogaster (Fruit fly)).